A 1755-amino-acid chain; its full sequence is Transposon Ty1-GR2 Gag-Pol polyprotein (1755 aa).

A compositionally biased stretch (low complexity) spans 1 to 16 (MESQQLSQHSHISHGS). Disordered stretches follow at residues 1-93 (MESQ…MMTQ), 126-173 (PQSQ…RPPP), and 352-421 (GSRN…SKST). Polar residues-rich tracts occupy residues 48-60 (TKAN…TPAS) and 127-152 (QSQF…GNTF). Positions 153-165 (TDSSSADSDMTST) are enriched in low complexity. Positions 299–401 (NNGIHINNKV…NSKSKTARAH (103 aa)) are RNA-binding. Residues 402-418 (NVSTSNNSPSTDNDSIS) are compositionally biased toward low complexity. S416 bears the Phosphoserine mark. D461 functions as the For protease activity; shared with dimeric partner in the catalytic mechanism. Residues 583–640 (NVHTSESTRKYPYPFIHRMLAHANAQTIRYSLKNNTITYFNESDVDWSSAIDYQCPDC) are integrase-type zinc finger-like. The Integrase catalytic domain occupies 660–835 (NSYEPFQYLH…AGLDISTLLP (176 aa)). Mg(2+) contacts are provided by D671 and D736. Disordered regions lie at residues 956-1087 (SKAV…ETEK), 1092-1111 (RSPS…NIVP), and 1130-1187 (DLPL…DNET). Over residues 960–969 (SPTDSTPPST) the composition is skewed to low complexity. Positions 1005-1015 (STPQISNIEST) are enriched in polar residues. Positions 1038–1053 (ESSHASKSKDFRHSDS) are enriched in basic and acidic residues. 2 stretches are compositionally biased toward polar residues: residues 1054-1082 (YSEN…QISD) and 1101-1111 (PENNSSHNIVP). The Bipartite nuclear localization signal signature appears at 1178 to 1212 (KKRSLEDNETEIKVSRDTWNTKNMRSLEPPRSKKR). The 139-residue stretch at 1338-1476 (NNYYITQLDI…DILGLEIKYQ (139 aa)) folds into the Reverse transcriptase Ty1/copia-type domain. Mg(2+) is bound by residues D1346, D1427, D1428, D1610, E1652, and D1685. In terms of domain architecture, RNase H Ty1/copia-type spans 1610-1752 (DASYGNQPYY…IKTFKLLTNK (143 aa)).

In terms of assembly, the capsid protein forms a homotrimer, from which the VLPs are assembled. The protease is a homodimer, whose active site consists of two apposed aspartic acid residues. In terms of processing, initially, virus-like particles (VLPs) are composed of the structural unprocessed proteins Gag and Gag-Pol, and also contain the host initiator methionine tRNA (tRNA(i)-Met) which serves as a primer for minus-strand DNA synthesis, and a dimer of genomic Ty RNA. Processing of the polyproteins occurs within the particle and proceeds by an ordered pathway, called maturation. First, the protease (PR) is released by autocatalytic cleavage of the Gag-Pol polyprotein yielding capsid protein p45 and a Pol-p154 precursor protein. This cleavage is a prerequisite for subsequent processing of Pol-p154 at the remaining sites to release the mature structural and catalytic proteins. Maturation takes place prior to the RT reaction and is required to produce transposition-competent VLPs.

The protein localises to the cytoplasm. It localises to the nucleus. The enzyme catalyses DNA(n) + a 2'-deoxyribonucleoside 5'-triphosphate = DNA(n+1) + diphosphate. The catalysed reaction is Endonucleolytic cleavage to 5'-phosphomonoester.. Capsid protein (CA) is the structural component of the virus-like particle (VLP), forming the shell that encapsulates the retrotransposons dimeric RNA genome. The particles are assembled from trimer-clustered units and there are holes in the capsid shells that allow for the diffusion of macromolecules. CA also has nucleocapsid-like chaperone activity, promoting primer tRNA(i)-Met annealing to the multipartite primer-binding site (PBS), dimerization of Ty1 RNA and initiation of reverse transcription. Its function is as follows. The aspartyl protease (PR) mediates the proteolytic cleavages of the Gag and Gag-Pol polyproteins after assembly of the VLP. Functionally, reverse transcriptase/ribonuclease H (RT) is a multifunctional enzyme that catalyzes the conversion of the retro-elements RNA genome into dsDNA within the VLP. The enzyme displays a DNA polymerase activity that can copy either DNA or RNA templates, and a ribonuclease H (RNase H) activity that cleaves the RNA strand of RNA-DNA heteroduplexes during plus-strand synthesis and hydrolyzes RNA primers. The conversion leads to a linear dsDNA copy of the retrotransposon that includes long terminal repeats (LTRs) at both ends. In terms of biological role, integrase (IN) targets the VLP to the nucleus, where a subparticle preintegration complex (PIC) containing at least integrase and the newly synthesized dsDNA copy of the retrotransposon must transit the nuclear membrane. Once in the nucleus, integrase performs the integration of the dsDNA into the host genome. The sequence is that of Transposon Ty1-GR2 Gag-Pol polyprotein (TY1B-GR2) from Saccharomyces cerevisiae (strain ATCC 204508 / S288c) (Baker's yeast).